A 55-amino-acid polypeptide reads, in one-letter code: Large ribosomal subunit protein bL33 (55 aa).

Belongs to the bacterial ribosomal protein bL33 family.

The chain is Large ribosomal subunit protein bL33 from Kocuria rhizophila (strain ATCC 9341 / DSM 348 / NBRC 103217 / DC2201).